Here is a 599-residue protein sequence, read N- to C-terminus: UvrABC system protein C (599 aa).

The GIY-YIG domain maps to E19–V95. A UVR domain is found at E206 to L241.

This sequence belongs to the UvrC family. Interacts with UvrB in an incision complex.

The protein resides in the cytoplasm. The UvrABC repair system catalyzes the recognition and processing of DNA lesions. UvrC both incises the 5' and 3' sides of the lesion. The N-terminal half is responsible for the 3' incision and the C-terminal half is responsible for the 5' incision. The sequence is that of UvrABC system protein C from Dictyoglomus thermophilum (strain ATCC 35947 / DSM 3960 / H-6-12).